Consider the following 223-residue polypeptide: Urease accessory protein UreF (223 aa).

This sequence belongs to the UreF family. In terms of assembly, ureD, UreF and UreG form a complex that acts as a GTP-hydrolysis-dependent molecular chaperone, activating the urease apoprotein by helping to assemble the nickel containing metallocenter of UreC. The UreE protein probably delivers the nickel.

Its subcellular location is the cytoplasm. Functionally, required for maturation of urease via the functional incorporation of the urease nickel metallocenter. In Rhizobium leguminosarum bv. trifolii (strain WSM2304), this protein is Urease accessory protein UreF.